The chain runs to 96 residues: Transcriptional regulator ATRY (96 aa).

Residues 1-12 (VICTACGQQVNQ) form a GATA-type; atypical zinc finger. An ADD domain is found at 1–96 (VICTACGQQV…IAVCDSVLEN (96 aa)). A PHD-type; atypical zinc finger spans residues 27-82 (LICKRWCAEGGNLICCDSCHNAFCKKCIWRNLGRKEISKIMNEKNEWHCYICCPEP).

The protein belongs to the SNF2/RAD54 helicase family. In terms of tissue distribution, expressed in developing and adult testis. Also weakly expressed in prostate and epididymis.

The protein localises to the nucleus. It catalyses the reaction ATP + H2O = ADP + phosphate + H(+). Its function is as follows. Could be a global transcriptional regulator. Modifies gene expression by affecting chromatin. This Notamacropus eugenii (Tammar wallaby) protein is Transcriptional regulator ATRY (ATRY).